The primary structure comprises 1567 residues: Putative DEAH-box ATP-dependent helicase UM11114 (1567 aa).

2 disordered regions span residues 1-95 (MAPR…PGSK) and 670-734 (ESSV…ETRR). Positions 10–20 (IKSSGTTSSKA) are enriched in polar residues. Low complexity-rich tracts occupy residues 39-48 (TKAAKQQQTQ) and 55-73 (AISA…AASS). A compositionally biased stretch (gly residues) spans 74–83 (AGGGGGGGQG). Polar residues-rich tracts occupy residues 670–687 (ESSV…TPTG) and 713–726 (LQRQ…SPSY). One can recognise a Helicase ATP-binding domain in the interval 746–924 (LGLIRSNRVV…FGKAPCISIP (179 aa)). Residue 759-766 (GETGCGKT) coordinates ATP. The DEAH box motif lies at 871–874 (DEVH). A Helicase C-terminal domain is found at 1003–1184 (VVRYVVERAE…SLFLEVKSMR (182 aa)).

Belongs to the DEAD box helicase family. DEAH subfamily.

This Mycosarcoma maydis (Corn smut fungus) protein is Putative DEAH-box ATP-dependent helicase UM11114.